The chain runs to 189 residues: 3-isopropylmalate dehydratase small subunit (189 aa).

It belongs to the LeuD family. LeuD type 1 subfamily. Heterodimer of LeuC and LeuD.

The enzyme catalyses (2R,3S)-3-isopropylmalate = (2S)-2-isopropylmalate. It functions in the pathway amino-acid biosynthesis; L-leucine biosynthesis; L-leucine from 3-methyl-2-oxobutanoate: step 2/4. Catalyzes the isomerization between 2-isopropylmalate and 3-isopropylmalate, via the formation of 2-isopropylmaleate. The polypeptide is 3-isopropylmalate dehydratase small subunit (Staphylococcus epidermidis (strain ATCC 35984 / DSM 28319 / BCRC 17069 / CCUG 31568 / BM 3577 / RP62A)).